A 107-amino-acid chain; its full sequence is Small ribosomal subunit protein uS10 (107 aa).

It belongs to the universal ribosomal protein uS10 family. Part of the 30S ribosomal subunit.

Its function is as follows. Involved in the binding of tRNA to the ribosomes. This is Small ribosomal subunit protein uS10 from Deinococcus geothermalis (strain DSM 11300 / CIP 105573 / AG-3a).